Reading from the N-terminus, the 185-residue chain is Large ribosomal subunit protein uL5 (185 aa).

This sequence belongs to the universal ribosomal protein uL5 family. Part of the 50S ribosomal subunit; part of the 5S rRNA/L5/L18/L25 subcomplex. Contacts the 5S rRNA and the P site tRNA. Forms a bridge to the 30S subunit in the 70S ribosome.

Its function is as follows. This is one of the proteins that bind and probably mediate the attachment of the 5S RNA into the large ribosomal subunit, where it forms part of the central protuberance. In the 70S ribosome it contacts protein S13 of the 30S subunit (bridge B1b), connecting the 2 subunits; this bridge is implicated in subunit movement. Contacts the P site tRNA; the 5S rRNA and some of its associated proteins might help stabilize positioning of ribosome-bound tRNAs. In Nitrobacter hamburgensis (strain DSM 10229 / NCIMB 13809 / X14), this protein is Large ribosomal subunit protein uL5.